A 134-amino-acid chain; its full sequence is Mini-ribonuclease 3 (134 aa).

Residue D22 is part of the active site.

This sequence belongs to the MrnC RNase family. Homodimer. It depends on Mg(2+) as a cofactor.

The protein resides in the cytoplasm. Involved in correct processing of both the 5' and 3' ends of 23S rRNA precursor. Processes 30S rRNA precursor transcript even in absence of ribonuclease 3 (Rnc); Rnc processes 30S rRNA into smaller rRNA precursors. The protein is Mini-ribonuclease 3 of Staphylococcus aureus (strain NCTC 8325 / PS 47).